The chain runs to 422 residues: 3-phosphoshikimate 1-carboxyvinyltransferase (422 aa).

3-phosphoshikimate is bound by residues K21, S22, and R26. Residue K21 coordinates phosphoenolpyruvate. Residues G93 and R121 each coordinate phosphoenolpyruvate. 3-phosphoshikimate-binding residues include S166, S167, Q168, S194, D310, and K337. Residue Q168 coordinates phosphoenolpyruvate. D310 functions as the Proton acceptor in the catalytic mechanism. Phosphoenolpyruvate contacts are provided by R341, R382, and K407.

This sequence belongs to the EPSP synthase family. As to quaternary structure, monomer.

The protein resides in the cytoplasm. It catalyses the reaction 3-phosphoshikimate + phosphoenolpyruvate = 5-O-(1-carboxyvinyl)-3-phosphoshikimate + phosphate. Its pathway is metabolic intermediate biosynthesis; chorismate biosynthesis. Functionally, catalyzes the transfer of the enolpyruvyl moiety of phosphoenolpyruvate (PEP) to the 5-hydroxyl of shikimate-3-phosphate (S3P) to produce enolpyruvyl shikimate-3-phosphate and inorganic phosphate. In Methanoculleus marisnigri (strain ATCC 35101 / DSM 1498 / JR1), this protein is 3-phosphoshikimate 1-carboxyvinyltransferase.